We begin with the raw amino-acid sequence, 212 residues long: Bilin biosynthesis protein PecF (212 aa).

Belongs to the CpcE/RpcE/PecE family.

In terms of biological role, an enzyme involved in the biosynthesis of bilin. In Mastigocladus laminosus (Fischerella sp.), this protein is Bilin biosynthesis protein PecF (pecF).